The chain runs to 1028 residues: Receptor-type guanylate cyclase gcy-13 (1028 aa).

Residues Asn58, Asn156, Asn324, Asn337, Asn377, and Asn394 are each glycosylated (N-linked (GlcNAc...) asparagine). A helical transmembrane segment spans residues 438-458 (IVVIVAVIIVLCCAAAAIAAF). At 459 to 1028 (LVIKARRDEE…WLLGMKEESA (570 aa)) the chain is on the cytoplasmic side. The disordered stretch occupies residues 491-511 (ESHHSSRSLQSNSTTTTGTTG). The segment covering 497–511 (RSLQSNSTTTTGTTG) has biased composition (low complexity). One can recognise a Protein kinase domain in the interval 499–770 (LQSNSTTTTG…DMVNKLMKNM (272 aa)). Residues 786 to 817 (SVLEKHASSLEDEVQERMKELVEEKKKSDILL) adopt a coiled-coil conformation. Residues 844–974 (TIFFSDVVGF…DTVNTASRME (131 aa)) form the Guanylate cyclase domain.

This sequence belongs to the adenylyl cyclase class-4/guanylyl cyclase family. As to expression, expressed bilaterally in RIM interneurons.

Its subcellular location is the cell membrane. The catalysed reaction is GTP = 3',5'-cyclic GMP + diphosphate. Its function is as follows. Guanylate cyclase involved in the production of the second messenger cGMP. The polypeptide is Receptor-type guanylate cyclase gcy-13 (Caenorhabditis elegans).